Reading from the N-terminus, the 279-residue chain is Putative pyruvate, phosphate dikinase regulatory protein (279 aa).

156–163 is an ADP binding site; it reads GVSRTSKT.

It belongs to the pyruvate, phosphate/water dikinase regulatory protein family. PDRP subfamily.

It catalyses the reaction N(tele)-phospho-L-histidyl/L-threonyl-[pyruvate, phosphate dikinase] + ADP = N(tele)-phospho-L-histidyl/O-phospho-L-threonyl-[pyruvate, phosphate dikinase] + AMP + H(+). It carries out the reaction N(tele)-phospho-L-histidyl/O-phospho-L-threonyl-[pyruvate, phosphate dikinase] + phosphate + H(+) = N(tele)-phospho-L-histidyl/L-threonyl-[pyruvate, phosphate dikinase] + diphosphate. In terms of biological role, bifunctional serine/threonine kinase and phosphorylase involved in the regulation of the pyruvate, phosphate dikinase (PPDK) by catalyzing its phosphorylation/dephosphorylation. In Maricaulis maris (strain MCS10) (Caulobacter maris), this protein is Putative pyruvate, phosphate dikinase regulatory protein.